The primary structure comprises 323 residues: uncharacterized protein (323 aa).

Disordered stretches follow at residues 185–214 (AELMKSEDSPEKDEETLRREERKQKEGSSW) and 271–294 (GNIISQKDNPPKSDSDDEDDYEKL).

This sequence belongs to the IGBP1/TAP42 family.

This is an uncharacterized protein from Schizosaccharomyces pombe (strain 972 / ATCC 24843) (Fission yeast).